The primary structure comprises 913 residues: MDFNNCGFIDPQAQLAGALAKQDIRQFVAALDSGALADLQDDRHTSIYEKALSTPGCRDFIEACIDHGSQVNYINKKLDKAAISYAADSRDPGNLAALLKYRPGNKVQVDRKYGQLTPLNSLAKNLTDENAPDVYSCMQLLLDYGASPNIVDQGEFTPLHHVLRKSKVKAGKKELIQLFLDHPELDIDSYRNGEVRRLLQAQFPELKLPEERHTGPEIDIQTLQRTLRDGDETLFEQQFAEYLQNLKGGADNQLNAHQEEYFGLLQESIKRGRQRAFDVILSTGMDINSRPGRANEANLVETAVIYGNWQALERLLKEPNLRLTPDSKLLNAVIGRLDEPPYDGSSHQRCFELLINSDRVDINEADSGRLVPLFFAVKYRNTSAMQKLLKNGAYIGSKSAFGTLPIKDMPPEVLEEHFDSCITTNGERPGDQNFEIIIDYKNLMRQERDSGLNQLQDEMAPIAFIAESKEMRHLLQHPLISSFLFLKWHRLSVIFYLNFLIYSLFTASIITYTLLKFHESDQRALTAFFGLLSWLGISYLILRECIQWIMSPVRYFWSITNIMEVALITLSIFTCMESSFDKETQRVLAVFTILLVSMEFCLLVGSLPVLSISTHMLMLREVSNSFLKSFTLYSIFVLTFSLCFYILFGKSVEEDQSKSATPCPPLGKKEGKDEEQGFNTFTKPIEAVIKTIVMLTGEFDAGSIQFTSIYTYLIFLLFVIFMTIVLFNLLNGLAVSDTQVIKAQAELNGAICRTNVLSRYEQVLTGHGRAGFLLGNHLFRSICQRLMNIYPNYLSLRQISVLPNDGNKVLIPMSDPFEMRTLKKASFQQLPLSAAVPQKKLLDPPLRLLPCCCSLLTGKCSQMSGRVVKRALEVIDQKNAAEQRRKQEQINDSRLKLIEYKLEQLIQLVQDRK.

The Cytoplasmic segment spans residues 1-490 (MDFNNCGFID…SSFLFLKWHR (490 aa)). ANK repeat units follow at residues 154-189 (GEFTPLHHVLRKSKVKAGKKELIQLFLDHPELDIDS), 260-289 (EYFGLLQESIKRGRQRAFDVILSTGMDINS), and 368-397 (GRLVPLFFAVKYRNTSAMQKLLKNGAYIGS). The helical transmembrane segment at 491-511 (LSVIFYLNFLIYSLFTASIIT) threads the bilayer. The Extracellular segment spans residues 512–523 (YTLLKFHESDQR). The chain crosses the membrane as a helical span at residues 524–544 (ALTAFFGLLSWLGISYLILRE). Topologically, residues 545-555 (CIQWIMSPVRY) are cytoplasmic. Residues 556–576 (FWSITNIMEVALITLSIFTCM) traverse the membrane as a helical segment. Over 577-586 (ESSFDKETQR) the chain is Extracellular. The helical transmembrane segment at 587–607 (VLAVFTILLVSMEFCLLVGSL) threads the bilayer. Topologically, residues 608–628 (PVLSISTHMLMLREVSNSFLK) are cytoplasmic. Residues 629-649 (SFTLYSIFVLTFSLCFYILFG) traverse the membrane as a helical segment. The Extracellular portion of the chain corresponds to 650-708 (KSVEEDQSKSATPCPPLGKKEGKDEEQGFNTFTKPIEAVIKTIVMLTGEFDAGSIQFTS). Residues 656-675 (QSKSATPCPPLGKKEGKDEE) are disordered. Residues 709–729 (IYTYLIFLLFVIFMTIVLFNL) form a helical membrane-spanning segment. Residues 730–913 (LNGLAVSDTQ…QLIQLVQDRK (184 aa)) lie on the Cytoplasmic side of the membrane.

Belongs to the transient receptor (TC 1.A.4) family. Present in multidendritic neurons, chordotonal neurons, a subset of cells in the central nervous system and a subset of sensory neurons in the antennal-maxillary complex. Not detected in gonads and dorsal vessels (at protein level). Expressed in peripheral neurons that extend multiple branched dendrites beneath the larval epidermis, similar to vertebrate pain receptors.

It is found in the membrane. Functionally, receptor-activated non-selective cation channel involved in detection of pain sensation due to high temperature. Involved in heat nociception by being activated by noxious temperature of 38 degrees Celsius. In Drosophila melanogaster (Fruit fly), this protein is Transient receptor potential cation channel protein painless (pain).